The primary structure comprises 279 residues: UPF0173 metal-dependent hydrolase MXAN_1394 (279 aa).

It belongs to the UPF0173 family.

The chain is UPF0173 metal-dependent hydrolase MXAN_1394 from Myxococcus xanthus (strain DK1622).